The chain runs to 523 residues: UDP-glucuronosyltransferase 3A1 (523 aa).

The first 22 residues, 1–22 (MAAHRSWLLVSFFLLEVLLLEA), serve as a signal peptide directing secretion. Residues 23–487 (AKILTISTLS…QPWHEQYMLD (465 aa)) lie on the Extracellular side of the membrane. N-linked (GlcNAc...) asparagine glycosylation is present at N70. A helical transmembrane segment spans residues 488–508 (VFLFLLGLTLGTLWLSVKVLV). Over 509-523 (AVTRYLSISRKVKQA) the chain is Cytoplasmic.

Belongs to the UDP-glycosyltransferase family. As to expression, highly expressed in kidney, while it is expressed at low levels in liver. Not detected in other tissues examined.

The protein localises to the membrane. It carries out the reaction glucuronate acceptor + UDP-alpha-D-glucuronate = acceptor beta-D-glucuronoside + UDP + H(+). UDP-glucuronosyltransferases catalyze phase II biotransformation reactions in which lipophilic substrates are conjugated with glucuronic acid to increase water solubility and enhance excretion. They are of major importance in the conjugation and subsequent elimination of potentially toxic xenobiotics and endogenous compounds. In Mus musculus (Mouse), this protein is UDP-glucuronosyltransferase 3A1 (Ugt3a1).